Consider the following 358-residue polypeptide: Methylthioribose-1-phosphate isomerase (358 aa).

Residues 54–56, Arg96, and Gln205 each bind substrate; that span reads RGA. The active-site Proton donor is the Asp246. 256-257 serves as a coordination point for substrate; sequence SK.

The protein belongs to the eIF-2B alpha/beta/delta subunits family. MtnA subfamily.

It catalyses the reaction 5-(methylsulfanyl)-alpha-D-ribose 1-phosphate = 5-(methylsulfanyl)-D-ribulose 1-phosphate. Its pathway is amino-acid biosynthesis; L-methionine biosynthesis via salvage pathway; L-methionine from S-methyl-5-thio-alpha-D-ribose 1-phosphate: step 1/6. Its function is as follows. Catalyzes the interconversion of methylthioribose-1-phosphate (MTR-1-P) into methylthioribulose-1-phosphate (MTRu-1-P). The protein is Methylthioribose-1-phosphate isomerase of Pseudomonas putida (strain GB-1).